The primary structure comprises 765 residues: Nucleolar transcription factor 1 (765 aa).

The residue at position 1 (Met-1) is an N-acetylmethionine. Positions 1–21 (MNGEADCPTDLEMAAPKGQDR) are disordered. 2 consecutive DNA-binding regions (HMG box) follow at residues 112–180 (PKKP…ARFR) and 196–264 (PEKP…RDYI). Thr-201 bears the Phosphothreonine mark. 3 positions are modified to phosphoserine: Ser-273, Ser-336, and Ser-364. A DNA-binding region (HMG box 3) is located at residues 298–362 (TKPPPNSYSL…DYEVELLRFL (65 aa)). Positions 370–379 (QQRVLGEEKM) are enriched in basic and acidic residues. The disordered stretch occupies residues 370-411 (QQRVLGEEKMLNINKKQTTSPASKKPSQEGGKGGSEKPKRPV). Phosphoserine occurs at positions 389, 412, 433, 435, 484, 495, 546, 584, and 638. 3 DNA-binding regions (HMG box) span residues 407-475 (PKRP…GGER), 482-549 (PESP…SEMR), and 568-634 (KKPP…DLWV). The interval 456–487 (YKAREAALKAQSERKPGGEREDRGKLPESPKR) is disordered. The segment covering 457-487 (KAREAALKAQSERKPGGEREDRGKLPESPKR) has biased composition (basic and acidic residues). The tract at residues 546-576 (SEMRAPPAATNSSKKMKFQGEPKKPPMNGYQ) is disordered. The interval 649-765 (ISNKRKNMTK…SGDSSDSGSN (117 aa)) is disordered. Residues 664–674 (PKSSRTTLQSK) show a composition bias toward polar residues. Over residues 677-746 (SEEDDDEEEE…DDDEDEDNES (70 aa)) the composition is skewed to acidic residues. Residues 747–765 (EGSSSSSSSSGDSSDSGSN) are compositionally biased toward low complexity.

In terms of assembly, homodimer. Part of Pol I pre-initiation complex (PIC), in which Pol I core assembles with RRN3 and promoter-bound UTBF and SL1/TIF-IB complex. Interacts with TOP2A in the context of Pol I complex. Interacts with TBP. Interacts with TAF1A. Interacts with RASL11A. Binds to IRS1 and PIK3CA. Interacts with DHX33. Interacts with PHF6. Interacts with CEBPA (isoform 1 and isoform 4). Interacts with DDX11. Interacts with NOP53. Interacts with ALKBH2. In terms of processing, phosphorylated and activated by PIK3CA.

The protein localises to the nucleus. It is found in the nucleolus. Its function is as follows. Recognizes the ribosomal RNA gene promoter and activates transcription mediated by RNA polymerase I through cooperative interactions with the transcription factor SL1/TIF-IB complex. It binds specifically to the upstream control element. This Mus musculus (Mouse) protein is Nucleolar transcription factor 1 (Ubtf).